Reading from the N-terminus, the 506-residue chain is MEYDGRRPYSVLTRNEITVKMKKQINEISDIFFISNSDATVLLMYLRWDSLRVSERLGENKEKLLMDSGLKSVMIDPSPDSSSEISLETDVYEFDGDNDLISMPFCSHKFDSKYWREYLEKNFYYVEKIQTTISCPDQDCRSAVGPDTIEKLTVRDQEMYERYIWRSYIEGNKVLMIKQCPARNCDYVIEFHQENDDDDEYSLNVVCICGHIFCWRCRLESHRPVSCNKASDWLCSATMKISDESFSLYPTKTKTVTCPHCLCSLESDTKMPQFLTCVCRLRFCSRCLRSEEAHKIEAVDSGFCIKTEVGILCEDRWNVCQKLLEQAKSDLEAFEETNIKKPSDLLREQDIMIIREGLMLIVQCRRVLKWCCVYDYFHTEYENSKEYLRYLQGNAIATLQSYSNTLQEQKDIVLAAATYEECTFFRHTIPTATSNIGNYFYDFMKTLQDGLVDVKVKSYNGGTGPFWYCDRCTYANTWEDNECEMCYDDSASLVGEISDLFLNKVS.

The TRIAD supradomain stretch occupies residues 79-308; sequence PDSSSEISLE…VDSGFCIKTE (230 aa). Residues 83–140 form an RING-type 1 zinc finger; sequence SEISLETDVYEFDGDNDLISMPFCSHKFDSKYWREYLEKNFYYVEKIQTTISCPDQDC. Cys-106, His-108, Cys-135, Cys-140, Cys-180, Cys-185, Cys-207, Cys-209, Cys-214, Cys-217, His-222, Cys-227, Cys-258, Cys-261, Cys-277, Cys-279, Cys-284, Cys-287, His-294, and Cys-304 together coordinate Zn(2+). The IBR-type zinc finger occupies 158 to 227; sequence EMYERYIWRS…RLESHRPVSC (70 aa). An RING-type 2; atypical zinc finger spans residues 258–287; sequence CPHCLCSLESDTKMPQFLTCVCRLRFCSRC. A RanBP2-type zinc finger spans residues 462-492; that stretch reads GTGPFWYCDRCTYANTWEDNECEMCYDDSAS.

It belongs to the RBR family. Ariadne subfamily. It depends on Zn(2+) as a cofactor. In terms of tissue distribution, mostly expressed in closed flowers and, to a lower extent, in pollen.

The enzyme catalyses [E2 ubiquitin-conjugating enzyme]-S-ubiquitinyl-L-cysteine + [acceptor protein]-L-lysine = [E2 ubiquitin-conjugating enzyme]-L-cysteine + [acceptor protein]-N(6)-ubiquitinyl-L-lysine.. It functions in the pathway protein modification; protein ubiquitination. In terms of biological role, might act as an E3 ubiquitin-protein ligase, or as part of E3 complex, which accepts ubiquitin from specific E2 ubiquitin-conjugating enzymes and then transfers it to substrates. Negatively regulates male gametophyte formation and double fertilization. The protein is Probable E3 ubiquitin-protein ligase ARI14 of Arabidopsis thaliana (Mouse-ear cress).